Reading from the N-terminus, the 816-residue chain is Sucrose synthase 2 (816 aa).

Residues 280 to 757 (MVLNVVILSP…GLQRIEEKYT (478 aa)) are GT-B glycosyltransferase.

This sequence belongs to the glycosyltransferase 1 family. Plant sucrose synthase subfamily. Forms homotetramers and heterotetramers with SS1, all three possible heterotetramers are formed. As to expression, abundant in developing endosperm, low in aleurone, and undetected in coleoptiles and roots. Also detected in crude extracts of anthers and in immature embryos.

It catalyses the reaction an NDP-alpha-D-glucose + D-fructose = a ribonucleoside 5'-diphosphate + sucrose + H(+). Its function is as follows. Sucrose-cleaving enzyme that provides UDP-glucose and fructose for various metabolic pathways. The sequence is that of Sucrose synthase 2 (SS2) from Hordeum vulgare (Barley).